Consider the following 147-residue polypeptide: Large ribosomal subunit protein bL21 (147 aa).

Residues 115–147 (KSIKVGKPTPKSSSKKEETVKKETKPKSEKSTN) are disordered. Positions 128–147 (SKKEETVKKETKPKSEKSTN) are enriched in basic and acidic residues.

This sequence belongs to the bacterial ribosomal protein bL21 family. As to quaternary structure, part of the 50S ribosomal subunit. Contacts protein L20.

This protein binds to 23S rRNA in the presence of protein L20. The polypeptide is Large ribosomal subunit protein bL21 (Prochlorococcus marinus (strain MIT 9215)).